Reading from the N-terminus, the 452-residue chain is Lysine-rich nucleolar protein 1 (452 aa).

Disordered regions lie at residues 1–28 (MITK…VKEP), 55–161 (VIQE…AFSG), and 184–305 (REQA…PDTD). Lys-7 is covalently cross-linked (Glycyl lysine isopeptide (Lys-Gly) (interchain with G-Cter in SUMO2)). A compositionally biased stretch (basic residues) spans 65–75 (LVKKKKKKKGH). Over residues 78 to 98 (ICEEHLEPEITLRAGRTERSH) the composition is skewed to basic and acidic residues. A Phosphoserine modification is found at Ser-112. A Glycyl lysine isopeptide (Lys-Gly) (interchain with G-Cter in SUMO2) cross-link involves residue Lys-126. A compositionally biased stretch (basic and acidic residues) spans 127–139 (TSPDPRQDEEVTR). Ser-128 bears the Phosphoserine mark. Composition is skewed to basic residues over residues 140–151 (VGKKLKKHKKEK) and 258–267 (SVKKKVKSKK). A Phosphoserine modification is found at Ser-258. A Glycyl lysine isopeptide (Lys-Gly) (interchain with G-Cter in SUMO2) cross-link involves residue Lys-280. Over residues 293–305 (VAEEPWEEEPDTD) the composition is skewed to acidic residues. Residues 300–452 (EEPDTDLEVV…NASKSIKFED (153 aa)) form an interaction with ZNF106 region. Thr-304 bears the Phosphothreonine mark. Glycyl lysine isopeptide (Lys-Gly) (interchain with G-Cter in SUMO2) cross-links involve residues Lys-313, Lys-347, Lys-367, Lys-369, and Lys-401. Arg-424 carries the omega-N-methylarginine modification. Residue Lys-436 forms a Glycyl lysine isopeptide (Lys-Gly) (interchain with G-Cter in SUMO2) linkage.

In terms of assembly, interacts with ZNF106.

It localises to the nucleus. It is found in the nucleolus. The chain is Lysine-rich nucleolar protein 1 (KNOP1) from Bos taurus (Bovine).